A 431-amino-acid polypeptide reads, in one-letter code: Trigger factor (431 aa).

Positions 164-249 (GDIAVIDFKG…IKEIKRKELP (86 aa)) constitute a PPIase FKBP-type domain.

It belongs to the FKBP-type PPIase family. Tig subfamily.

It is found in the cytoplasm. It carries out the reaction [protein]-peptidylproline (omega=180) = [protein]-peptidylproline (omega=0). In terms of biological role, involved in protein export. Acts as a chaperone by maintaining the newly synthesized protein in an open conformation. Functions as a peptidyl-prolyl cis-trans isomerase. The sequence is that of Trigger factor from Clostridium acetobutylicum (strain ATCC 824 / DSM 792 / JCM 1419 / IAM 19013 / LMG 5710 / NBRC 13948 / NRRL B-527 / VKM B-1787 / 2291 / W).